The primary structure comprises 141 residues: Large ribosomal subunit protein uL11 (141 aa).

The protein belongs to the universal ribosomal protein uL11 family. As to quaternary structure, part of the ribosomal stalk of the 50S ribosomal subunit. Interacts with L10 and the large rRNA to form the base of the stalk. L10 forms an elongated spine to which L12 dimers bind in a sequential fashion forming a multimeric L10(L12)X complex. In terms of processing, one or more lysine residues are methylated.

Its function is as follows. Forms part of the ribosomal stalk which helps the ribosome interact with GTP-bound translation factors. This Natranaerobius thermophilus (strain ATCC BAA-1301 / DSM 18059 / JW/NM-WN-LF) protein is Large ribosomal subunit protein uL11.